Here is a 99-residue protein sequence, read N- to C-terminus: Probable non-specific lipid-transfer protein AKCS9 (99 aa).

The signal sequence occupies residues 1–33 (MTMKMKMKMSVVCAVVVVALFLIDVGPVAEAVT). 4 cysteine pairs are disulfide-bonded: Cys-34-Cys-68, Cys-42-Cys-56, Cys-57-Cys-92, and Cys-66-Cys-99.

This sequence belongs to the plant LTP family. In terms of tissue distribution, expressed in most tissues except nodules.

Functionally, potential lipid transfer protein. The protein is Probable non-specific lipid-transfer protein AKCS9 of Vigna unguiculata (Cowpea).